Here is a 1248-residue protein sequence, read N- to C-terminus: Cullin-associated NEDD8-dissociated protein 1 (1248 aa).

HEAT repeat units lie at residues 44–82, 127–165, 168–206, 365–403, 425–463, 510–548, 604–642, 644–682, 861–900, 976–1014, and 1054–1093; these read DESEKKVVRMVLKLLEDKNGEVQNLAVKCLGPLVNKVKE, PNVCQRITGKLSTAIEKEDVSVKLESLDILADLLSRFGE, VPFHSTILKALMPQLASSRQAVRKRTIVALSFLLIQANS, EDFYRSLSPALIARFKEREENVKSDIFHAYVALLKNTRL, IEQLPLIVKAIQPLMREKSMKTRQDCFLLLRELLNSLPG, HPHIPLLVPLVVTSVFDPFYKIATEALLVLQQLVKVIRP, QNELAVCLPIFMERLKNEVTRLSSVKALTLIAASSLRID, TPILHDVLPALGTFLRKNHRALKLHSLDLINKIVINYSS, DLSSIQVLPQTIIECFGATSEDVKAAASHALGAVSVGSLQ, LVNPDELLPQLQQALRSESATMRTVVVSSVKFTISDQPQ, and PSLVRDLLPTLLPWLYSETKVKSELIREVEMGPFKHTVDD.

This sequence belongs to the CAND family.

In terms of biological role, key assembly factor of SCF (SKP1-CUL1-F-box protein) E3 ubiquitin ligase complexes that promotes the exchange of the substrate-recognition F-box subunit in SCF complexes, thereby playing a key role in the cellular repertoire of SCF complexes. Acts as a F-box protein exchange factor. Probably plays a similar role in other cullin-RING E3 ubiquitin ligase complexes. This chain is Cullin-associated NEDD8-dissociated protein 1 (Cand1), found in Drosophila melanogaster (Fruit fly).